A 251-amino-acid chain; its full sequence is NADPH-dependent oxidoreductase (251 aa).

This sequence belongs to the flavin oxidoreductase frp family. FMN serves as cofactor.

Its function is as follows. Reduces FMN, organic nitro compounds and disulfide DTNB. Involved in maintenance of the cellular redox state and the disulfide stress response. This Staphylococcus aureus (strain MRSA252) protein is NADPH-dependent oxidoreductase (nfrA).